The sequence spans 889 residues: DNA mismatch repair protein MutS (889 aa).

622-629 (GPNMAGKS) contacts ATP. Residues 869 to 889 (QRVKRPEKAPADVTAETEDQE) form a disordered region.

It belongs to the DNA mismatch repair MutS family.

Its function is as follows. This protein is involved in the repair of mismatches in DNA. It is possible that it carries out the mismatch recognition step. This protein has a weak ATPase activity. In Desulfatibacillum aliphaticivorans, this protein is DNA mismatch repair protein MutS.